The following is a 104-amino-acid chain: Iron-sulfur cluster assembly protein CyaY (104 aa).

Belongs to the frataxin family.

Involved in iron-sulfur (Fe-S) cluster assembly. May act as a regulator of Fe-S biogenesis. The protein is Iron-sulfur cluster assembly protein CyaY of Aliivibrio fischeri (strain MJ11) (Vibrio fischeri).